A 372-amino-acid chain; its full sequence is ATP phosphoribosyltransferase regulatory subunit (372 aa).

It belongs to the class-II aminoacyl-tRNA synthetase family. HisZ subfamily. In terms of assembly, heteromultimer composed of HisG and HisZ subunits.

Its subcellular location is the cytoplasm. The protein operates within amino-acid biosynthesis; L-histidine biosynthesis; L-histidine from 5-phospho-alpha-D-ribose 1-diphosphate: step 1/9. In terms of biological role, required for the first step of histidine biosynthesis. May allow the feedback regulation of ATP phosphoribosyltransferase activity by histidine. In Allorhizobium ampelinum (strain ATCC BAA-846 / DSM 112012 / S4) (Agrobacterium vitis (strain S4)), this protein is ATP phosphoribosyltransferase regulatory subunit.